The following is an 82-amino-acid chain: MRVLSTVLAAKNKIALGAATMLVSAGSFAAEPNAATNYATEAMDSLKTQAIDLISQTWPVVTTVVVAGLVIRLFKKFSSKAV.

Residues 1–29 (MRVLSTVLAAKNKIALGAATMLVSAGSFA) form the signal peptide. At 30–54 (AEPNAATNYATEAMDSLKTQAIDLI) the chain is on the periplasmic side. The helical transmembrane segment at 55 to 74 (SQTWPVVTTVVVAGLVIRLF) threads the bilayer. Residues 75–82 (KKFSSKAV) are Cytoplasmic-facing.

This sequence belongs to the inovirus capsid protein family. Homomultimerizes. There are several thousands of this protein in the phage capsid.

The protein localises to the virion. Its subcellular location is the host membrane. Its function is as follows. Self assembles to form a helical capsid wrapping up the viral genomic DNA. The capsid displays a filamentous structure with a length of 760-1950 nm and a width of 6-8 nm. The virion assembly and budding take place at the host inner membrane. The chain is Capsid protein G8P (VIII) from Salmonella phage IKe (Bacteriophage IKe).